Here is a 1627-residue protein sequence, read N- to C-terminus: Formin-like protein 5 (1627 aa).

In terms of domain architecture, Phosphatase tensin-type spans 5-194 (RKFFLKKTPD…HYITRQGSGP (190 aa)). The active-site Phosphocysteine intermediate is the Cys127. The 138-residue stretch at 200-337 (SRPLILDSIV…FRAEVVFSDP (138 aa)) folds into the C2 tensin-type domain. Disordered regions lie at residues 370-413 (EAEE…LEKH), 680-787 (TKRE…YDSS), 801-1181 (KFNV…RGVV), 1241-1261 (AAVP…SLGS), and 1571-1627 (KQAE…KDVG). Basic and acidic residues-rich tracts occupy residues 402–413 (VSREDSGSLEKH), 681–691 (KREESGGRRDV), 700–717 (IEAR…RQIP), and 726–742 (MPVD…EKLG). Composition is skewed to pro residues over residues 824 to 835 (APPPPPPPPPPY), 852 to 870 (QPPP…PPPA), 877 to 886 (IPPPPPPPPL), 897 to 908 (VPPPPPPPPPPR), 931 to 965 (ISPP…PPSA), and 974 to 1168 (APPP…PPGG). The FH2 domain occupies 1188 to 1588 (FGAAAARKST…RAEKEAEAEK (401 aa)). Composition is skewed to basic and acidic residues over residues 1248–1261 (DSSK…SLGS) and 1571–1590 (KQAE…EKSK). The span at 1600–1611 (KPSNPSRQVKQT) shows a compositional bias: polar residues. Residues 1612–1627 (PDTKTRAASRRGKDVG) are compositionally biased toward basic and acidic residues.

The protein belongs to the formin-like family. Class-II subfamily.

This Oryza sativa subsp. japonica (Rice) protein is Formin-like protein 5 (FH5).